The following is a 195-amino-acid chain: MSGNNESASYASSLARLDTYYREKVVPALMERFQYKNIMEVPRLQKIAINIGVGDAAGEPKLLDVAVGELTQIAGQKPQIRKSKKAISNFKLREGQAIGCRVTLRRKAMYEFFDRFVSLAVPRIRDFRGLSDTSFDGRGNYTAGVKEQIIFPEIDIDKVPRISGMDISFVTSAKSDEEAYVLLSELGMPFKKKNN.

It belongs to the universal ribosomal protein uL5 family. As to quaternary structure, part of the 50S ribosomal subunit; part of the 5S rRNA/L5/L18/L25 subcomplex. Contacts the 5S rRNA and the P site tRNA. Forms a bridge to the 30S subunit in the 70S ribosome.

Functionally, this is one of the proteins that bind and probably mediate the attachment of the 5S RNA into the large ribosomal subunit, where it forms part of the central protuberance. In the 70S ribosome it contacts protein S13 of the 30S subunit (bridge B1b), connecting the 2 subunits; this bridge is implicated in subunit movement. Contacts the P site tRNA; the 5S rRNA and some of its associated proteins might help stabilize positioning of ribosome-bound tRNAs. The chain is Large ribosomal subunit protein uL5 from Chlorobium chlorochromatii (strain CaD3).